We begin with the raw amino-acid sequence, 574 residues long: Excitatory amino acid transporter 2 (574 aa).

Residues 1–44 (MASTEGANNMPKQVEVRMHDSHLGSEEPKHRHLGLRLCDKLGKN) lie on the Cytoplasmic side of the membrane. Phosphoserine is present on residues Ser-3, Ser-21, and Ser-25. The S-palmitoyl cysteine moiety is linked to residue Cys-38. The chain crosses the membrane as a helical span at residues 45-64 (LLLTLTVFGVILGAVCGGLL). At 65–87 (RLASPIHPDVVMLIAFPGDILMR) the chain is on the extracellular side. Residues 88–108 (MLKMLILPLIISSLITGLSGL) traverse the membrane as a helical segment. The Cytoplasmic portion of the chain corresponds to 109-120 (DAKASGRLGTRA). The helical transmembrane segment at 121 to 142 (MVYYMSTTIIAAVLGVILVLAI) threads the bilayer. Topologically, residues 143–235 (HPGNPKLKKQ…TKMVIKKGLE (93 aa)) are extracellular. N-linked (GlcNAc...) asparagine glycosylation is found at Asn-206 and Asn-216. A helical membrane pass occupies residues 236-259 (FKDGMNVLGLIGFFIAFGIAMGKM). Over 260 to 268 (GDQAKLMVD) the chain is Cytoplasmic. The chain crosses the membrane as a helical span at residues 269-296 (FFNILNEIVMKLVIMIMWYSPLGIACLI). The Extracellular segment spans residues 297–317 (CGKIIAIKDLEVVARQLGMYM). The chain crosses the membrane as a helical span at residues 318–339 (VTVIIGLIIHGGIFLPLIYFVV). At 340–344 (TRKNP) the chain is on the cytoplasmic side. An intramembrane region (discontinuously helical) is located at residues 345-375 (FSFFAGIFQAWITALGTASSAGTLPVTFRCL). 362–364 (ASS) contacts L-aspartate. Over 376–384 (EENLGIDKR) the chain is Cytoplasmic. A helical membrane pass occupies residues 385 to 411 (VTRFVLPVGATINMDGTALYEAVAAIF). The Na(+) site is built by Gly-393, Thr-395, and Asn-397. Thr-401 is an L-aspartate binding site. Residues 412 to 424 (IAQMNGVVLDGGQ) lie on the Extracellular side of the membrane. Positions 425–458 (IVTVSLTATLASVGAASIPSAGLVTMLLILTAVG) form an intramembrane region, discontinuously helical. 442-446 (IPSAG) is an L-aspartate binding site. At 459-471 (LPTEDISLLVAVD) the chain is on the extracellular side. The chain crosses the membrane as a helical span at residues 472–493 (WLLDRMRTSVNVVGDSFGAGIV). Residues Asp-475 and Asn-482 each coordinate L-aspartate. Asn-482 and Asp-486 together coordinate Na(+). Residues 494-574 (YHLSKSELDT…VEEEPWKREK (81 aa)) lie on the Cytoplasmic side of the membrane. Phosphoserine occurs at positions 506, 521, 532, and 534. Tyr-539 is modified (phosphotyrosine). Ser-544, Ser-560, and Ser-564 each carry phosphoserine.

It belongs to the dicarboxylate/amino acid:cation symporter (DAACS) (TC 2.A.23) family. SLC1A2 subfamily. In terms of assembly, homotrimer. Isoform 3 can oligomerize with isoform 1. Interacts with AJUBA. In terms of processing, glycosylated. Post-translationally, palmitoylation at Cys-38 is not required for correct subcellular localization, but is important for glutamate uptake activity.

Its subcellular location is the cell membrane. The enzyme catalyses K(+)(in) + L-glutamate(out) + 3 Na(+)(out) + H(+)(out) = K(+)(out) + L-glutamate(in) + 3 Na(+)(in) + H(+)(in). It carries out the reaction K(+)(in) + L-aspartate(out) + 3 Na(+)(out) + H(+)(out) = K(+)(out) + L-aspartate(in) + 3 Na(+)(in) + H(+)(in). It catalyses the reaction D-aspartate(out) + K(+)(in) + 3 Na(+)(out) + H(+)(out) = D-aspartate(in) + K(+)(out) + 3 Na(+)(in) + H(+)(in). Sodium-dependent, high-affinity amino acid transporter that mediates the uptake of L-glutamate and also L-aspartate and D-aspartate. Functions as a symporter that transports one amino acid molecule together with two or three Na(+) ions and one proton, in parallel with the counter-transport of one K(+) ion. Mediates Cl(-) flux that is not coupled to amino acid transport; this avoids the accumulation of negative charges due to aspartate and Na(+) symport. Essential for the rapid removal of released glutamate from the synaptic cleft, and for terminating the postsynaptic action of glutamate. This Homo sapiens (Human) protein is Excitatory amino acid transporter 2.